An 80-amino-acid chain; its full sequence is Regulatory protein HrpD6 (80 aa).

Functionally, involved in the regulation of several genes of the hrp-hrc-hpa cluster, which encodes a type III secretion system (T3SS). Upregulates the expression of hpa2, hpa1 and hpaB and partially controls the expression of hrcC and hrcT. Controls the secretion of the T3SS TAL effector AvrXa27. Also regulates the expression of several HrpX-regulated protein (Xrp) genes. Has no influence on hrpG or hrpX expression. The chain is Regulatory protein HrpD6 from Xanthomonas oryzae pv. oryzicola.